A 760-amino-acid chain; its full sequence is Probable myosin-binding protein 4 (760 aa).

A helical membrane pass occupies residues 26 to 46 (WFLILLMFIDALLSYLLVWFA). Disordered regions lie at residues 161-189 (SRGR…SLKK), 247-273 (SEKR…QPVL), 292-311 (SMLG…VKAK), and 348-595 (EAEV…KHSA). Over residues 352–366 (SGSSSPSGGEFLSPS) the composition is skewed to low complexity. Residues 371-383 (ASREIRIQEHDDS) are compositionally biased toward basic and acidic residues. Residues 385–394 (DFSQNITSSA) are compositionally biased toward polar residues. The stretch at 388 to 416 (QNITSSAMEIEEFEAAIEQKESDHMDVSG) forms a coiled coil. A compositionally biased stretch (basic and acidic residues) spans 404–413 (IEQKESDHMD). Composition is skewed to acidic residues over residues 446–458 (LEQE…ESEV) and 517–526 (EEDVDNEESE). 2 stretches are compositionally biased toward basic and acidic residues: residues 537 to 550 (VKEE…HGDH) and 562 to 580 (SKEE…KITE). The 99-residue stretch at 611 to 709 (SLVEVLKQQL…DLEMELEYYR (99 aa)) folds into the GTD-binding domain. A disordered region spans residues 725–760 (GILGNTEETNVTSPTDETSIKDSTDTKLTGSPSAEN). Polar residues-rich tracts occupy residues 730–741 (TEETNVTSPTDE) and 750–760 (TKLTGSPSAEN).

Its subcellular location is the endomembrane system. Its function is as follows. Membrane-anchored myosin receptors that define a distinct, plant-specific transport vesicle compartment. The polypeptide is Probable myosin-binding protein 4 (Arabidopsis thaliana (Mouse-ear cress)).